Here is a 173-residue protein sequence, read N- to C-terminus: Large ribosomal subunit protein bL9 (173 aa).

It belongs to the bacterial ribosomal protein bL9 family.

Functionally, binds to the 23S rRNA. In Rickettsia bellii (strain RML369-C), this protein is Large ribosomal subunit protein bL9.